A 367-amino-acid chain; its full sequence is D-alanine--D-alanine ligase (367 aa).

The region spanning 148–357 is the ATP-grasp domain; that stretch reads KMAFEQAGLP…FPELVDKLVQ (210 aa). Position 184–239 (184–239) interacts with ATP; the sequence is EASLGYPCFVKPANLGSSVGISKVRSRQELEDALDNAANYDRRIIVEAGVVAREVE. Residues Asp-310, Glu-324, and Asn-326 each contribute to the Mg(2+) site.

It belongs to the D-alanine--D-alanine ligase family. Mg(2+) is required as a cofactor. It depends on Mn(2+) as a cofactor.

It is found in the cytoplasm. The catalysed reaction is 2 D-alanine + ATP = D-alanyl-D-alanine + ADP + phosphate + H(+). Its pathway is cell wall biogenesis; peptidoglycan biosynthesis. Cell wall formation. This Trichormus variabilis (strain ATCC 29413 / PCC 7937) (Anabaena variabilis) protein is D-alanine--D-alanine ligase.